Here is a 264-residue protein sequence, read N- to C-terminus: Ribosomal protein L11 methyltransferase (264 aa).

Residues Thr-116, Gly-137, Asp-159, and Asn-200 each contribute to the S-adenosyl-L-methionine site.

It belongs to the methyltransferase superfamily. PrmA family.

It is found in the cytoplasm. The catalysed reaction is L-lysyl-[protein] + 3 S-adenosyl-L-methionine = N(6),N(6),N(6)-trimethyl-L-lysyl-[protein] + 3 S-adenosyl-L-homocysteine + 3 H(+). Functionally, methylates ribosomal protein L11. This is Ribosomal protein L11 methyltransferase from Thermotoga neapolitana (strain ATCC 49049 / DSM 4359 / NBRC 107923 / NS-E).